The sequence spans 393 residues: Pyrimidine monooxygenase RutA (393 aa).

FMN is bound by residues 79–80 (IK), Asn-145, Glu-154, 170–171 (RY), and Ser-220.

The protein belongs to the NtaA/SnaA/DszA monooxygenase family. RutA subfamily.

It carries out the reaction uracil + FMNH2 + NADH + O2 = (Z)-3-ureidoacrylate + FMN + NAD(+) + H2O + H(+). The enzyme catalyses thymine + FMNH2 + NADH + O2 = (Z)-2-methylureidoacrylate + FMN + NAD(+) + H2O + H(+). In terms of biological role, catalyzes the pyrimidine ring opening between N-3 and C-4 by an unusual flavin hydroperoxide-catalyzed mechanism, adding oxygen atoms in the process to yield ureidoacrylate peracid, that immediately reacts with FMN forming ureidoacrylate and FMN-N(5)-oxide. The FMN-N(5)-oxide reacts spontaneously with NADH to produce FMN. Requires the flavin reductase RutF to regenerate FMN in vivo. The chain is Pyrimidine monooxygenase RutA from Escherichia coli O6:H1 (strain CFT073 / ATCC 700928 / UPEC).